Reading from the N-terminus, the 285-residue chain is Pantothenate synthetase (285 aa).

30 to 37 (MGNLHDGH) contacts ATP. Catalysis depends on H37, which acts as the Proton donor. Position 61 (Q61) interacts with (R)-pantoate. Q61 is a binding site for beta-alanine. An ATP-binding site is contributed by 149 to 152 (GEKD). Position 155 (Q155) interacts with (R)-pantoate. Residues I178 and 186–189 (LSSR) each bind ATP.

It belongs to the pantothenate synthetase family. As to quaternary structure, homodimer.

Its subcellular location is the cytoplasm. It carries out the reaction (R)-pantoate + beta-alanine + ATP = (R)-pantothenate + AMP + diphosphate + H(+). It participates in cofactor biosynthesis; (R)-pantothenate biosynthesis; (R)-pantothenate from (R)-pantoate and beta-alanine: step 1/1. In terms of biological role, catalyzes the condensation of pantoate with beta-alanine in an ATP-dependent reaction via a pantoyl-adenylate intermediate. In Buchnera aphidicola subsp. Acyrthosiphon pisum (strain Tuc7), this protein is Pantothenate synthetase.